The sequence spans 893 residues: Translation initiation factor IF-2 (893 aa).

Disordered regions lie at residues 51-203 and 216-300; these read KEHG…AEAE and EENE…SMQH. Basic and acidic residues-rich tracts occupy residues 102–203, 216–238, and 245–261; these read ALEE…AEAE, EENE…DADY, and HARE…EQQP. The tr-type G domain occupies 392 to 561; it reads GRAPVVTIMG…LLQSEVLELT (170 aa). The G1 stretch occupies residues 401-408; that stretch reads GHVDHGKT. 401–408 contributes to the GTP binding site; that stretch reads GHVDHGKT. The interval 426-430 is G2; it reads GITQH. A G3 region spans residues 447–450; that stretch reads DTPG. Residues 447-451 and 501-504 contribute to the GTP site; these read DTPGH and NKID. The interval 501 to 504 is G4; it reads NKID. Residues 537–539 are G5; sequence SAK.

This sequence belongs to the TRAFAC class translation factor GTPase superfamily. Classic translation factor GTPase family. IF-2 subfamily.

The protein resides in the cytoplasm. In terms of biological role, one of the essential components for the initiation of protein synthesis. Protects formylmethionyl-tRNA from spontaneous hydrolysis and promotes its binding to the 30S ribosomal subunits. Also involved in the hydrolysis of GTP during the formation of the 70S ribosomal complex. This chain is Translation initiation factor IF-2, found in Aliivibrio fischeri (strain MJ11) (Vibrio fischeri).